The sequence spans 413 residues: 5'-deoxyadenosine deaminase (413 aa).

H57 and H59 together coordinate Zn(2+). Residues E86 and H171 each contribute to the substrate site. Zn(2+) is bound at residue H198. Positions 201 and 286 each coordinate substrate. Residue D286 coordinates Zn(2+).

It belongs to the metallo-dependent hydrolases superfamily. MTA/SAH deaminase family. As to quaternary structure, homotetramer. Zn(2+) is required as a cofactor.

It catalyses the reaction 5'-deoxyadenosine + H2O + H(+) = 5'-deoxyinosine + NH4(+). The enzyme catalyses S-adenosyl-L-homocysteine + H2O + H(+) = S-inosyl-L-homocysteine + NH4(+). The catalysed reaction is S-methyl-5'-thioadenosine + H2O + H(+) = S-methyl-5'-thioinosine + NH4(+). It carries out the reaction adenosine + H2O + H(+) = inosine + NH4(+). It participates in amino-acid biosynthesis; S-adenosyl-L-methionine biosynthesis. In terms of biological role, catalyzes the deamination of three SAM-derived enzymatic products, namely 5'-deoxyadenosine, S-adenosyl-L-homocysteine, and 5'-methylthioadenosine, to produce the inosine analogs. Can also deaminate adenosine. The preferred substrate for this enzyme is 5'-deoxyadenosine, but all these substrates are efficiently deaminated. Likely functions in a S-adenosyl-L-methionine (SAM) recycling pathway from S-adenosyl-L-homocysteine (SAH) produced from SAM-dependent methylation reactions. May also be involved in the recycling of 5'-deoxyadenosine, whereupon the 5'-deoxyribose moiety of 5'-deoxyinosine is further metabolized to deoxyhexoses used for the biosynthesis of aromatic amino acids in methanogens. The protein is 5'-deoxyadenosine deaminase of Methanothrix thermoacetophila (strain DSM 6194 / JCM 14653 / NBRC 101360 / PT) (Methanosaeta thermophila).